The chain runs to 132 residues: Small ribosomal subunit protein uS11 (132 aa).

The protein belongs to the universal ribosomal protein uS11 family. As to quaternary structure, part of the 30S ribosomal subunit. Interacts with proteins S7 and S18. Binds to IF-3.

In terms of biological role, located on the platform of the 30S subunit, it bridges several disparate RNA helices of the 16S rRNA. Forms part of the Shine-Dalgarno cleft in the 70S ribosome. This Chlamydia trachomatis serovar A (strain ATCC VR-571B / DSM 19440 / HAR-13) protein is Small ribosomal subunit protein uS11.